We begin with the raw amino-acid sequence, 338 residues long: RNA 3'-terminal phosphate cyclase (338 aa).

ATP contacts are provided by residues Gln-103 and 283 to 287 (YLADQ). Residue His-308 is the Tele-AMP-histidine intermediate of the active site.

This sequence belongs to the RNA 3'-terminal cyclase family. Type 1 subfamily.

It localises to the cytoplasm. It catalyses the reaction a 3'-end 3'-phospho-ribonucleotide-RNA + ATP = a 3'-end 2',3'-cyclophospho-ribonucleotide-RNA + AMP + diphosphate. Catalyzes the conversion of 3'-phosphate to a 2',3'-cyclic phosphodiester at the end of RNA. The mechanism of action of the enzyme occurs in 3 steps: (A) adenylation of the enzyme by ATP; (B) transfer of adenylate to an RNA-N3'P to produce RNA-N3'PP5'A; (C) and attack of the adjacent 2'-hydroxyl on the 3'-phosphorus in the diester linkage to produce the cyclic end product. The biological role of this enzyme is unknown but it is likely to function in some aspects of cellular RNA processing. The chain is RNA 3'-terminal phosphate cyclase from Escherichia coli O139:H28 (strain E24377A / ETEC).